The primary structure comprises 112 residues: Large ribosomal subunit protein uL22 (112 aa).

This sequence belongs to the universal ribosomal protein uL22 family. Part of the 50S ribosomal subunit.

Functionally, this protein binds specifically to 23S rRNA; its binding is stimulated by other ribosomal proteins, e.g. L4, L17, and L20. It is important during the early stages of 50S assembly. It makes multiple contacts with different domains of the 23S rRNA in the assembled 50S subunit and ribosome. In terms of biological role, the globular domain of the protein is located near the polypeptide exit tunnel on the outside of the subunit, while an extended beta-hairpin is found that lines the wall of the exit tunnel in the center of the 70S ribosome. This is Large ribosomal subunit protein uL22 from Akkermansia muciniphila (strain ATCC BAA-835 / DSM 22959 / JCM 33894 / BCRC 81048 / CCUG 64013 / CIP 107961 / Muc).